The sequence spans 226 residues: Protein-L-isoaspartate O-methyltransferase (226 aa).

Residue S75 is part of the active site.

The protein belongs to the methyltransferase superfamily. L-isoaspartyl/D-aspartyl protein methyltransferase family.

The protein localises to the cytoplasm. The catalysed reaction is [protein]-L-isoaspartate + S-adenosyl-L-methionine = [protein]-L-isoaspartate alpha-methyl ester + S-adenosyl-L-homocysteine. Functionally, catalyzes the methyl esterification of L-isoaspartyl residues in peptides and proteins that result from spontaneous decomposition of normal L-aspartyl and L-asparaginyl residues. It plays a role in the repair and/or degradation of damaged proteins. In Lawsonia intracellularis (strain PHE/MN1-00), this protein is Protein-L-isoaspartate O-methyltransferase.